The primary structure comprises 412 residues: Putative phosphate permease PF1020 (412 aa).

The next 10 helical transmembrane spans lie at 7-27 (MLADPILLITILLGFAMAWAI), 50-70 (AVIIAGVLEFMGAYFFGKTVT), 88-108 (VLIFGSIAALIGATIWLVIAT), 119-139 (SIIGGIVGYGIVYGGMSIVNW), 143-163 (IKVVLSWILSPIVGAIFAYLV), 187-207 (FWIGLAFVVIGTMFYIKVLHG), 213-233 (GFLKYGMPAGILTFIVVSLIL), 298-318 (WILALGGLGIAIGVATYGYKV), 335-355 (FTIDFSAATVVLIASWLGMPI), and 384-404 (DIIISWFVTVPAAGVIAGIIF).

The protein belongs to the inorganic phosphate transporter (PiT) (TC 2.A.20) family.

Its subcellular location is the cell membrane. In terms of biological role, potential transporter for phosphate. This Pyrococcus furiosus (strain ATCC 43587 / DSM 3638 / JCM 8422 / Vc1) protein is Putative phosphate permease PF1020.